The sequence spans 1023 residues: Sodium/potassium-transporting ATPase subunit alpha-1 (1023 aa).

Positions 1–5 (MGYGA) are excised as a propeptide. Positions 1-11 (MGYGAGRDKYE) are enriched in basic and acidic residues. The segment at 1–34 (MGYGAGRDKYEPAATSEHGGKKGKGKGKDRDMEE) is disordered. At 6–87 (GRDKYEPAAT…NALTPPPTTP (82 aa)) the chain is on the cytoplasmic side. At Thr15 the chain carries Phosphothreonine; by PKC. Position 16 is a phosphoserine; by PKC (Ser16). Positions 82-84 (PPP) are interaction with phosphoinositide-3 kinase. The chain crosses the membrane as a helical span at residues 88–108 (EWVKFCRQLFGGFSMLLWIGA). The Extracellular portion of the chain corresponds to 109–131 (ILCFLAYGIRKASDLEPDNDNLY). A helical transmembrane segment spans residues 132–152 (LGVVLSAVVIITGCFSYYQEA). The Cytoplasmic segment spans residues 153–288 (KSSRIMESFK…GGQTPIAVEI (136 aa)). The interval 215 to 235 (NSSLTGESEPQTRSPDFTNEN) is disordered. The helical transmembrane segment at 289 to 308 (GHFIHIITGVAVFLGVSFFI) threads the bilayer. Residues 309-320 (LSLILHYTWLEA) are Extracellular-facing. The chain crosses the membrane as a helical span at residues 321–338 (VIFLIGIIVANVPEGLLA). At 339 to 772 (TVTVCLTLTA…EEGRLIFDNL (434 aa)) the chain is on the cytoplasmic side. Asp376 (4-aspartylphosphate intermediate) is an active-site residue. Lys487 provides a ligand contact to ATP. Asp717 and Asp721 together coordinate Mg(2+). A helical transmembrane segment spans residues 773–792 (KKSIAYTLTSNIPEITPFLI). Topologically, residues 793 to 802 (FIIADIPLPL) are extracellular. A helical membrane pass occupies residues 803–823 (GTVTILCIDLGTDMVPAISLA). At 824-843 (YEQAESDIMKRQPRNPKKDK) the chain is on the cytoplasmic side. Residues 844–866 (LVNERLISMAYGQIGMIQALGGF) traverse the membrane as a helical segment. Over 867 to 918 (FAYFVILAENGFLPSTLLGIRVAWEDRYVNDVEDSYGQQWTYEQRKIVEFTC) the chain is Extracellular. Residues 919–938 (HTAFFVSIVVVQWADLIICK) traverse the membrane as a helical segment. Residues 939–951 (TRRNSVFQQGMKN) are Cytoplasmic-facing. Ser943 is modified (phosphoserine; by PKA). A helical membrane pass occupies residues 952-970 (KILIFGLFEETALAAFLSY). The Extracellular portion of the chain corresponds to 971-985 (CPGMDVALRMYPLKP). The chain crosses the membrane as a helical span at residues 986-1006 (TWWFCAFPYSLLIFIYDEVRK). Topologically, residues 1007–1023 (LILRRSPGGWVEKETYY) are cytoplasmic.

Belongs to the cation transport ATPase (P-type) (TC 3.A.3) family. Type IIC subfamily. The sodium/potassium-transporting ATPase is composed of a catalytic alpha subunit, an auxiliary non-catalytic beta subunit and an additional regulatory subunit. In terms of tissue distribution, mainly expressed in kidney. Found in bladder, colon, eye, and testis. Found in low levels in brain, heart, spleen and liver.

Its subcellular location is the cell membrane. It is found in the sarcolemma. It catalyses the reaction K(+)(out) + Na(+)(in) + ATP + H2O = K(+)(in) + Na(+)(out) + ADP + phosphate + H(+). With respect to regulation, this alpha subunit is resistant to ouabain. Functionally, this is the catalytic component of the active enzyme, which catalyzes the hydrolysis of ATP coupled with the exchange of sodium and potassium ions across the plasma membrane. This action creates the electrochemical gradient of sodium and potassium ions, providing the energy for active transport of various nutrients. The polypeptide is Sodium/potassium-transporting ATPase subunit alpha-1 (ATP1A1) (Rhinella marina (Cane toad)).